The sequence spans 279 residues: MTLADTIFKENIKKIMEQGVFSENARPRYKDGNVANSKYITGSFAEYDLSKGEFPITTLRPIAIKSAIKEVLWIYQDQSNSLELLNDKYNVHYWNDWEVGDTGTIGQRYGAVVKKHNIINKILQQLEANPWNRRNIISLWDYEAFEETDGLLPCAFQTMFDVRRVDGDIYLDATLTQRSNDMLVAHHINAMQYVALQMMIAKHFGWKVGKFFYFINNLHIYDNQFEQAEELLRREPSDCHPRLVLNVPDGTNFFDIKAEDFELLDYNPVKPQLKFDLAI.

Position 133–134 (133–134) interacts with dUMP; sequence RR. The active-site Nucleophile is the Cys154. DUMP-binding positions include 178–181, Asn189, and 219–221; these read RSND and HIY. Asp181 contacts (6R)-5,10-methylene-5,6,7,8-tetrahydrofolate. Ala278 serves as a coordination point for (6R)-5,10-methylene-5,6,7,8-tetrahydrofolate.

This sequence belongs to the thymidylate synthase family. Bacterial-type ThyA subfamily. As to quaternary structure, homodimer.

It is found in the cytoplasm. The enzyme catalyses dUMP + (6R)-5,10-methylene-5,6,7,8-tetrahydrofolate = 7,8-dihydrofolate + dTMP. Its pathway is pyrimidine metabolism; dTTP biosynthesis. Functionally, catalyzes the reductive methylation of 2'-deoxyuridine-5'-monophosphate (dUMP) to 2'-deoxythymidine-5'-monophosphate (dTMP) while utilizing 5,10-methylenetetrahydrofolate (mTHF) as the methyl donor and reductant in the reaction, yielding dihydrofolate (DHF) as a by-product. This enzymatic reaction provides an intracellular de novo source of dTMP, an essential precursor for DNA biosynthesis. In Streptococcus sanguinis (strain SK36), this protein is Thymidylate synthase.